Consider the following 248-residue polypeptide: Cyclin-Q (248 aa).

At M1 the chain carries N-acetylmethionine. Residues 1–12 (MEAPEGGGGGPA) show a composition bias toward gly residues. Residues 1–21 (MEAPEGGGGGPAARGPEGQPA) are disordered.

This sequence belongs to the cyclin family. Cyclin-like FAM58 subfamily. As to quaternary structure, associates with CDK10 to promote its kinase activity. Interacts with SALL1.

In terms of biological role, activating cyclin for the cyclin-associated kinase CDK10. The sequence is that of Cyclin-Q from Homo sapiens (Human).